A 594-amino-acid chain; its full sequence is MTMTLHTKASGMALLHQIQGNELETLNLPQFKIPLERPLGEVYVESSKPPVYDYPEGAAYDFNAAAAASASVYGQSGLAYGPGSEAAAFGANGLGGFPPLNSVSPSQLMLLHPPPQLSPYLHPPGQQVPYYLENEPSGYSVCEAGPQAFYRPNADNRRQGGRERLASSGDKGSMAMESAKETRYCAVCNDYASGYHYGVWSCEGCKAFFKRSIQGHNDYMCPATNQCTIDKNRRKSCQACRLRKCYEVGMMKGGIRKDRRGGRMLKHKRQRDDGEGRNEAGPSGDRRPANFWPSPLLIKHTKKISPVLSLTAEQMISALLDAEPPVLYSEYDATRPFNEASMMGLLTNLADRELVHMINWAKRVPGFVDLSLHDQVHLLECAWLEILMIGLVWRSMEHPGKLLFAPNLLLDRNQGKCVEGMVEIFDMLLATSSRLRMMNLQGEEFVCLKSIILLNSGVYTFLSSTLKSLEEKDHIHRVLDKMTDTLIHLMAKAGLTLQQHRRLAQLLLILSHIRHMSNKGMEHLYSMKCKNVVPLYDLLLEMLDAHRLHAPANHGGAPMEETNQSQLATTGSTSPHSMQTYYITGEAEGFPNTI.

The tract at residues 1-184 (MTMTLHTKAS…AMESAKETRY (184 aa)) is modulating (transactivation AF-1); mediates interaction with MACROD1. An O-linked (GlcNAc) serine glycan is attached at serine 10. The tract at residues 35-47 (LERPLGEVYVESS) is required for interaction with NCOA1. The tract at residues 35–174 (LERPLGEVYV…LASSGDKGSM (140 aa)) is interaction with DDX5; self-association. Serine 104 and serine 106 each carry phosphoserine; by CDK2. Serine 118 carries the post-translational modification Phosphoserine. The segment at 152 to 173 (PNADNRRQGGRERLASSGDKGS) is disordered. Residues 154-165 (ADNRRQGGRERL) show a composition bias toward basic and acidic residues. Serine 167 is modified (phosphoserine; by CK2). 2 consecutive NR C4-type zinc fingers follow at residues 185 to 205 (CAVC…CEGC) and 221 to 245 (CPAT…LRKC). A DNA-binding region (nuclear receptor) is located at residues 185–250 (CAVCNDYASG…RLRKCYEVGM (66 aa)). The segment at 185 to 310 (CAVCNDYASG…TKKISPVLSL (126 aa)) is mediates interaction with DNTTIP2. Residues 251–310 (MKGGIRKDRRGGRMLKHKRQRDDGEGRNEAGPSGDRRPANFWPSPLLIKHTKKISPVLSL) form a hinge region. Basic residues predominate over residues 257–269 (KDRRGGRMLKHKR). The tract at residues 257–293 (KDRRGGRMLKHKRQRDDGEGRNEAGPSGDRRPANFWP) is disordered. Arginine 260 is subject to Asymmetric dimethylarginine; by PRMT1. The tract at residues 262 to 594 (GRMLKHKRQR…GEAEGFPNTI (333 aa)) is interaction with AKAP13. A self-association region spans residues 264-594 (MLKHKRQRDD…GEAEGFPNTI (331 aa)). Over residues 270-288 (QRDDGEGRNEAGPSGDRRP) the composition is skewed to basic and acidic residues. One can recognise an NR LBD domain in the interval 311-546 (TAEQMISALL…DLLLEMLDAH (236 aa)). The segment at 311 to 594 (TAEQMISALL…GEAEGFPNTI (284 aa)) is transactivation AF-2. The 17beta-estradiol site is built by glutamate 353 and arginine 394. The S-palmitoyl cysteine moiety is linked to residue cysteine 447. A 17beta-estradiol-binding site is contributed by histidine 523. A Phosphotyrosine; by Tyr-kinases modification is found at tyrosine 536. The disordered stretch occupies residues 551–575 (PANHGGAPMEETNQSQLATTGSTSP). Polar residues predominate over residues 561–575 (ETNQSQLATTGSTSP). O-linked (GlcNAc) threonine glycosylation occurs at threonine 570.

The protein belongs to the nuclear hormone receptor family. NR3 subfamily. Binds DNA as a homodimer. Can form a heterodimer with ESR2. Interacts with coactivator NCOA5. Interacts with PELP1, the interaction is enhanced by 17-beta-estradiol; the interaction increases ESR1 transcriptional activity. Interacts with NCOA7; the interaction is ligand-inducible. Interacts with AKAP13, CUEDC2, HEXIM1, KDM5A, MAP1S, SMARD1, and UBE1C. Interacts with MUC1; the interaction is stimulated by 7 beta-estradiol (E2) and enhances ESR1-mediated transcription. Interacts with DNTTIP2, and UIMC1. Interacts with KMT2D/MLL2. Interacts with ATAD2; the interaction is enhanced by estradiol. Interacts with KIF18A and LDB1. Interacts with RLIM (via its C-terminus). Interacts with MACROD1. Interacts with SH2D4A and PLCG. Interacts with SH2D4A; the interaction blocks binding to PLCG and inhibits estrogen-induced cell proliferation. Interacts with DYNLL1. Interacts with CCDC62; the interaction requires estradiol and appears to enhance the transcription of target genes. Interacts with NR2C1; the interaction prevents homodimerization of ESR1 and suppresses its transcriptional activity and cell growth. Interacts with DNAAF4. Interacts with PRMT2. Interacts with RBFOX2. Interacts with EP300; the interaction is estrogen-dependent and enhanced by CITED1. Interacts with CITED1; the interaction is estrogen-dependent. Interacts with FAM120B, FOXL2, PHB2 and SLC30A9. Interacts with coactivators NCOA3 and NCOA6. Interacts with STK3/MST2 only in the presence of SAV1 and vice-versa. Binds to CSNK1D. Interacts with NCOA2; NCOA2 can interact with ESR1 AF-1 and AF-2 domains simultaneously and mediate their transcriptional synergy. Interacts with DDX5. Interacts with NCOA1; the interaction seems to require a self-association of N-terminal and C-terminal regions. Interacts with ZNF366, DDX17, NFKB1, RELA, SP1 and SP3. Interacts with NRIP1. Interacts with GPER1; the interaction occurs in an estrogen-dependent manner. Interacts with CLOCK and the interaction is stimulated by estrogen. Interacts with TRIP4 (ufmylated); estrogen dependent. Interacts with LMTK3; the interaction phosphorylates ESR1 (in vitro) and protects it against proteasomal degradation. Interacts with CCAR2 (via N-terminus) in a ligand-independent manner. Interacts with ZFHX3. Interacts with SFR1 in a ligand-dependent and -independent manner. Interacts with DCAF13, LATS1 and DCAF1; regulates ESR1 ubiquitination and ubiquitin-mediated proteasomal degradation. Interacts (via DNA-binding domain) with POU4F2 (C-terminus); this interaction increases the estrogen receptor ESR1 transcriptional activity in a DNA- and ligand 17-beta-estradiol-independent manner. Interacts with ESRRB isoform 1. Interacts with UBE3A and WBP2. Interacts with GTF2B. Interacts with RBM39. In the absence of hormonal ligand, interacts with TACC1. Interacts with PI3KR1 or PI3KR2 and PTK2/FAK1. Interacts with SRC. Interacts with BAG1; the interaction is promoted in the absence of estradiol (17-beta-estradiol/E2). Interacts with and ubiquitinated by STUB1; the interaction is promoted in the absence of estradiol (17-beta-estradiol/E2). Interacts with NEDD8. Ubiquitinated; regulated by LATS1 via DCAF1 it leads to ESR1 proteasomal degradation. Deubiquitinated by OTUB1. Ubiquitinated by STUB1/CHIP; in the CA1 hippocampal region following loss of endogenous circulating estradiol (17-beta-estradiol/E2). Ubiquitinated by UBR5, leading to its degradation: UBR5 specifically recognizes and binds ligand-bound ESR1 when it is not associated with coactivators (NCOAs). In presence of NCOAs, the UBR5-degron is not accessible, preventing its ubiquitination and degradation. In terms of processing, phosphorylated by cyclin A/CDK2 and CK1. Phosphorylation probably enhances transcriptional activity. Dephosphorylation at Ser-118 by PPP5C inhibits its transactivation activity. Phosphorylated by LMTK3 (in vitro). Post-translationally, palmitoylated at Cys-447 by ZDHHC7 and ZDHHC21. Palmitoylation is required for plasma membrane targeting and for rapid intracellular signaling via ERK and AKT kinases and cAMP generation, but not for signaling mediated by the nuclear hormone receptor. Dimethylated by PRMT1 at Arg-260. The methylation may favor cytoplasmic localization. Demethylated by JMJD6 at Arg-260.

Its subcellular location is the nucleus. It is found in the cytoplasm. The protein resides in the golgi apparatus. The protein localises to the cell membrane. Its function is as follows. Nuclear hormone receptor. The steroid hormones and their receptors are involved in the regulation of eukaryotic gene expression and affect cellular proliferation and differentiation in target tissues. Ligand-dependent nuclear transactivation involves either direct homodimer binding to a palindromic estrogen response element (ERE) sequence or association with other DNA-binding transcription factors, such as AP-1/c-Jun, c-Fos, ATF-2, Sp1 and Sp3, to mediate ERE-independent signaling. Ligand binding induces a conformational change allowing subsequent or combinatorial association with multiprotein coactivator complexes through LXXLL motifs of their respective components. Mutual transrepression occurs between the estrogen receptor (ER) and NF-kappa-B in a cell-type specific manner. Decreases NF-kappa-B DNA-binding activity and inhibits NF-kappa-B-mediated transcription from the IL6 promoter and displace RELA/p65 and associated coregulators from the promoter. Recruited to the NF-kappa-B response element of the CCL2 and IL8 promoters and can displace CREBBP. Present with NF-kappa-B components RELA/p65 and NFKB1/p50 on ERE sequences. Can also act synergistically with NF-kappa-B to activate transcription involving respective recruitment adjacent response elements; the function involves CREBBP. Can activate the transcriptional activity of TFF1. Also mediates membrane-initiated estrogen signaling involving various kinase cascades. Essential for MTA1-mediated transcriptional regulation of BRCA1 and BCAS3. Maintains neuronal survival in response to ischemic reperfusion injury when in the presence of circulating estradiol (17-beta-estradiol/E2). In Equus caballus (Horse), this protein is Estrogen receptor (ESR1).